The chain runs to 96 residues: Conotoxin Mr15.1 (96 aa).

The first 20 residues, 1-20 (MSTLKMMLLILLLLLPLATF), serve as a signal peptide directing secretion. Residues 21–57 (DSDGQAIPGGGIPSAVNSRVGRLLGGDEKSGRSLEKR) constitute a propeptide that is removed on maturation.

The protein belongs to the conotoxin N superfamily. Contains 4 disulfide bonds. As to expression, expressed by the venom duct.

It localises to the secreted. The polypeptide is Conotoxin Mr15.1 (Conus marmoreus (Marble cone)).